We begin with the raw amino-acid sequence, 208 residues long: 3-demethoxyubiquinol 3-hydroxylase (208 aa).

Residues glutamate 57, glutamate 87, histidine 90, glutamate 139, glutamate 171, and histidine 174 each coordinate Fe cation.

This sequence belongs to the COQ7 family. The cofactor is Fe cation.

It localises to the cell membrane. The enzyme catalyses a 5-methoxy-2-methyl-3-(all-trans-polyprenyl)benzene-1,4-diol + AH2 + O2 = a 3-demethylubiquinol + A + H2O. It functions in the pathway cofactor biosynthesis; ubiquinone biosynthesis. Functionally, catalyzes the hydroxylation of 2-nonaprenyl-3-methyl-6-methoxy-1,4-benzoquinol during ubiquinone biosynthesis. The polypeptide is 3-demethoxyubiquinol 3-hydroxylase (Burkholderia pseudomallei (strain 1106a)).